The following is a 200-amino-acid chain: 3-isopropylmalate dehydratase small subunit (200 aa).

The protein belongs to the LeuD family. LeuD type 1 subfamily. In terms of assembly, heterodimer of LeuC and LeuD.

The catalysed reaction is (2R,3S)-3-isopropylmalate = (2S)-2-isopropylmalate. Its pathway is amino-acid biosynthesis; L-leucine biosynthesis; L-leucine from 3-methyl-2-oxobutanoate: step 2/4. Catalyzes the isomerization between 2-isopropylmalate and 3-isopropylmalate, via the formation of 2-isopropylmaleate. The polypeptide is 3-isopropylmalate dehydratase small subunit (Yersinia pseudotuberculosis serotype O:1b (strain IP 31758)).